Reading from the N-terminus, the 206-residue chain is Acireductone dioxygenase (206 aa).

4 residues coordinate Fe(2+): His-102, His-104, Glu-108, and His-146. His-102, His-104, Glu-108, and His-146 together coordinate Ni(2+).

This sequence belongs to the acireductone dioxygenase (ARD) family. Monomer. The cofactor is Fe(2+). Requires Ni(2+) as cofactor.

The enzyme catalyses 1,2-dihydroxy-5-(methylsulfanyl)pent-1-en-3-one + O2 = 3-(methylsulfanyl)propanoate + CO + formate + 2 H(+). The catalysed reaction is 1,2-dihydroxy-5-(methylsulfanyl)pent-1-en-3-one + O2 = 4-methylsulfanyl-2-oxobutanoate + formate + 2 H(+). The protein operates within amino-acid biosynthesis; L-methionine biosynthesis via salvage pathway; L-methionine from S-methyl-5-thio-alpha-D-ribose 1-phosphate: step 5/6. Functionally, catalyzes 2 different reactions between oxygen and the acireductone 1,2-dihydroxy-3-keto-5-methylthiopentene (DHK-MTPene) depending upon the metal bound in the active site. Fe-containing acireductone dioxygenase (Fe-ARD) produces formate and 2-keto-4-methylthiobutyrate (KMTB), the alpha-ketoacid precursor of methionine in the methionine recycle pathway. Ni-containing acireductone dioxygenase (Ni-ARD) produces methylthiopropionate, carbon monoxide and formate, and does not lie on the methionine recycle pathway. The sequence is that of Acireductone dioxygenase from Frankia alni (strain DSM 45986 / CECT 9034 / ACN14a).